The primary structure comprises 284 residues: Syntaxin-like protein psy1 (284 aa).

Positions 23–57 form a coiled coil; it reads EEIDHIRDAIRQIEDNVGRIEMLHQQSLQEIDEAN. The t-SNARE coiled-coil homology domain occupies 181–243; sequence LREVQERHAD…GEGTQHMDRA (63 aa). The chain crosses the membrane as a helical; Anchor for type IV membrane protein span at residues 260–280; that stretch reads ICVVIICVIVAVLCGVLIPVL.

The protein belongs to the syntaxin family.

The protein localises to the cell membrane. Its subcellular location is the prospore membrane. The polypeptide is Syntaxin-like protein psy1 (psy1) (Schizosaccharomyces pombe (strain 972 / ATCC 24843) (Fission yeast)).